A 315-amino-acid chain; its full sequence is uncharacterized protein (315 aa).

Belongs to the asfivirus C315R family.

This is an uncharacterized protein from Ornithodoros (relapsing fever ticks).